A 211-amino-acid polypeptide reads, in one-letter code: Arginine exporter protein ArgO (211 aa).

The next 6 helical transmembrane spans lie at 1–21 (MISY…PLGP), 37–57 (LMIA…GIFG), 68–88 (LLAL…FGAL), 111–131 (IIAT…DTFV), 147–167 (WFAL…ALLA), and 179–199 (AQRI…FQLA).

It belongs to the LysE/ArgO transporter (TC 2.A.75) family.

The protein localises to the cell inner membrane. It catalyses the reaction L-arginine(in) = L-arginine(out). In terms of biological role, involved in the export of arginine. Important to control the intracellular level of arginine and the correct balance between arginine and lysine. This Salmonella paratyphi C (strain RKS4594) protein is Arginine exporter protein ArgO.